Here is a 283-residue protein sequence, read N- to C-terminus: 4-hydroxy-tetrahydrodipicolinate reductase (283 aa).

NAD(+) is bound by residues 15–20 (GALGRM) and 116–118 (GTT). The active-site Proton donor/acceptor is His-172. His-173 contributes to the (S)-2,3,4,5-tetrahydrodipicolinate binding site. Lys-176 (proton donor) is an active-site residue. 182 to 183 (GT) provides a ligand contact to (S)-2,3,4,5-tetrahydrodipicolinate.

This sequence belongs to the DapB family.

The protein localises to the cytoplasm. It carries out the reaction (S)-2,3,4,5-tetrahydrodipicolinate + NAD(+) + H2O = (2S,4S)-4-hydroxy-2,3,4,5-tetrahydrodipicolinate + NADH + H(+). The enzyme catalyses (S)-2,3,4,5-tetrahydrodipicolinate + NADP(+) + H2O = (2S,4S)-4-hydroxy-2,3,4,5-tetrahydrodipicolinate + NADPH + H(+). The protein operates within amino-acid biosynthesis; L-lysine biosynthesis via DAP pathway; (S)-tetrahydrodipicolinate from L-aspartate: step 4/4. Catalyzes the conversion of 4-hydroxy-tetrahydrodipicolinate (HTPA) to tetrahydrodipicolinate. This Prochlorococcus marinus (strain MIT 9313) protein is 4-hydroxy-tetrahydrodipicolinate reductase.